The chain runs to 520 residues: MTDTADHEHVLIVDFGSQVTQLIARRLRESGVYCEIHPYDKVDAVLDSFRPKAVILSGGPASVHEAESPAASKRLFELDVPVLGICYGEQTMCDVLGGKVEPGTTREFGRAEIEIVRESPLLDGLGGAGHFEPVWMSHGDKVTALPMGFETVAVSEGSPFAVIADEGRRFYGIQFHPEVAHTPRGALILRNFTHKIAGLKGDWTMKAFREEAIARIRDQVGDGRIICGLSGGVDSSVAAVLIHEAIGDQLTCVFVDHGLLRLNEAEQVVTMFRDHYNIPLVHVDAAEEFLGALAGVTDPETKRKTIGRLFVEVFDREAAKIEGAAFLAQGTLYPDVIESVSARGGPSAVIKSHHNVGGLPDYMKLKLVEPLRELFKDEVRALGVELGLPPQFVGRHPFPGPGLAIRIPGEVTPERVAILQKADAIYLDEIRKAGLYDSIWQAFAVLLPVRTVGVMGDARTYDEVCALRAVTSTDGMTADFFEFPWEVLSRAATRIINEVRGINRVVYDVTSKPPGTIEWE.

Positions 9–202 constitute a Glutamine amidotransferase type-1 domain; that stretch reads HVLIVDFGSQ…THKIAGLKGD (194 aa). Residue cysteine 86 is the Nucleophile of the active site. Residues histidine 176 and glutamate 178 contribute to the active site. The region spanning 203–395 is the GMPS ATP-PPase domain; the sequence is WTMKAFREEA…LGLPPQFVGR (193 aa). Residue 230–236 participates in ATP binding; the sequence is SGGVDSS.

As to quaternary structure, homodimer.

The catalysed reaction is XMP + L-glutamine + ATP + H2O = GMP + L-glutamate + AMP + diphosphate + 2 H(+). The protein operates within purine metabolism; GMP biosynthesis; GMP from XMP (L-Gln route): step 1/1. In terms of biological role, catalyzes the synthesis of GMP from XMP. The sequence is that of GMP synthase [glutamine-hydrolyzing] from Phenylobacterium zucineum (strain HLK1).